The following is a 282-amino-acid chain: Succinate dehydrogenase [ubiquinone] iron-sulfur subunit, mitochondrial (282 aa).

Residues 43–131 (YRFNPEAPGA…STKIYPLPHM (89 aa)) form the 2Fe-2S ferredoxin-type domain. The [2Fe-2S] cluster site is built by cysteine 91, cysteine 96, cysteine 99, and cysteine 111. The 4Fe-4S ferredoxin-type domain maps to 174–204 (ERDRLDGLYECILCACCSTSCPSYWWNADKY). Residues cysteine 184, cysteine 187, and cysteine 190 each contribute to the [4Fe-4S] cluster site. [3Fe-4S] cluster is bound at residue cysteine 194. Tryptophan 199 serves as a coordination point for a ubiquinone. 2 residues coordinate [3Fe-4S] cluster: cysteine 241 and cysteine 247. Cysteine 251 is a binding site for [4Fe-4S] cluster.

Belongs to the succinate dehydrogenase/fumarate reductase iron-sulfur protein family. In terms of assembly, component of complex II composed of four subunits: a flavoprotein (FP), an iron-sulfur protein (IP), and a cytochrome b composed of a large and a small subunit. [2Fe-2S] cluster serves as cofactor. It depends on [3Fe-4S] cluster as a cofactor. Requires [4Fe-4S] cluster as cofactor.

The protein resides in the mitochondrion inner membrane. It catalyses the reaction a quinone + succinate = fumarate + a quinol. It functions in the pathway carbohydrate metabolism; tricarboxylic acid cycle; fumarate from succinate (eukaryal route): step 1/1. In terms of biological role, iron-sulfur protein (IP) subunit of succinate dehydrogenase (SDH) that is involved in complex II of the mitochondrial electron transport chain and is responsible for transferring electrons from succinate to ubiquinone (coenzyme Q). This chain is Succinate dehydrogenase [ubiquinone] iron-sulfur subunit, mitochondrial, found in Caenorhabditis briggsae.